The chain runs to 253 residues: Phosphoglycerate mutase 2 (253 aa).

Threonine 3 is subject to Phosphothreonine. Substrate-binding positions include 10-17, 23-24, arginine 62, 89-92, lysine 100, and 116-117; these read RHGESTWN, CG, ERHY, and RR. Histidine 11 functions as the Tele-phosphohistidine intermediate in the catalytic mechanism. Residue serine 14 is modified to Phosphoserine. The active-site Proton donor/acceptor is the glutamate 89. Serine 118 carries the phosphoserine modification. Phosphotyrosine occurs at positions 132 and 133. Phosphoserine is present on serine 135. Position 152 is a phosphothreonine (threonine 152). A substrate-binding site is contributed by 187-188; it reads GN.

This sequence belongs to the phosphoglycerate mutase family. BPG-dependent PGAM subfamily. Homodimer.

It carries out the reaction (2R)-2-phosphoglycerate = (2R)-3-phosphoglycerate. It catalyses the reaction (2R)-3-phospho-glyceroyl phosphate = (2R)-2,3-bisphosphoglycerate + H(+). Its function is as follows. Interconversion of 3- and 2-phosphoglycerate with 2,3-bisphosphoglycerate as the primer of the reaction. Can also catalyze the reaction of EC 5.4.2.4 (synthase), but with a reduced activity. The sequence is that of Phosphoglycerate mutase 2 (PGAM2) from Bos taurus (Bovine).